Here is a 172-residue protein sequence, read N- to C-terminus: Bifunctional protein PyrR (172 aa).

The short motif at 93-105 is the PRPP-binding element; that stretch reads VILIDDVLYTGRT.

This sequence belongs to the purine/pyrimidine phosphoribosyltransferase family. PyrR subfamily. As to quaternary structure, homodimer and homohexamer; in equilibrium.

It catalyses the reaction UMP + diphosphate = 5-phospho-alpha-D-ribose 1-diphosphate + uracil. Its function is as follows. Regulates transcriptional attenuation of the pyrimidine nucleotide (pyr) operon by binding in a uridine-dependent manner to specific sites on pyr mRNA. This disrupts an antiterminator hairpin in the RNA and favors formation of a downstream transcription terminator, leading to a reduced expression of downstream genes. Functionally, also displays a weak uracil phosphoribosyltransferase activity which is not physiologically significant. The chain is Bifunctional protein PyrR from Streptococcus sanguinis (strain SK36).